The chain runs to 255 residues: Pyridoxine 5'-phosphate synthase (255 aa).

3-amino-2-oxopropyl phosphate contacts are provided by N8 and R19. Residue H44 is the Proton acceptor of the active site. Residues R46 and H51 each coordinate 1-deoxy-D-xylulose 5-phosphate. The active-site Proton acceptor is the E74. T111 contributes to the 1-deoxy-D-xylulose 5-phosphate binding site. The active-site Proton donor is H202. 3-amino-2-oxopropyl phosphate is bound by residues D203 and 225–226 (GH).

It belongs to the PNP synthase family. In terms of assembly, homooctamer; tetramer of dimers.

It is found in the cytoplasm. The catalysed reaction is 3-amino-2-oxopropyl phosphate + 1-deoxy-D-xylulose 5-phosphate = pyridoxine 5'-phosphate + phosphate + 2 H2O + H(+). It functions in the pathway cofactor biosynthesis; pyridoxine 5'-phosphate biosynthesis; pyridoxine 5'-phosphate from D-erythrose 4-phosphate: step 5/5. In terms of biological role, catalyzes the complicated ring closure reaction between the two acyclic compounds 1-deoxy-D-xylulose-5-phosphate (DXP) and 3-amino-2-oxopropyl phosphate (1-amino-acetone-3-phosphate or AAP) to form pyridoxine 5'-phosphate (PNP) and inorganic phosphate. The chain is Pyridoxine 5'-phosphate synthase from Xanthomonas oryzae pv. oryzae (strain MAFF 311018).